Here is a 157-residue protein sequence, read N- to C-terminus: Putative pre-16S rRNA nuclease (157 aa).

Belongs to the YqgF nuclease family.

It is found in the cytoplasm. Could be a nuclease involved in processing of the 5'-end of pre-16S rRNA. This Orientia tsutsugamushi (strain Ikeda) (Rickettsia tsutsugamushi) protein is Putative pre-16S rRNA nuclease.